The primary structure comprises 563 residues: Testis-expressed basic protein 1 (563 aa).

A helical transmembrane segment spans residues 3–23; the sequence is VLEITLAVILTLLGLAILAIL. Positions 56-81 are disordered; sequence GSRHAYSTQSDTSYDNRERSKRDYTP. The segment covering 69–79 has biased composition (basic and acidic residues); that stretch reads YDNRERSKRDY. Residues 99–119 traverse the membrane as a helical segment; sequence ELILLLMCFILALSRSSIGSI. A disordered region spans residues 311-563; that stretch reads SEMSIPQGQG…GRKYNKKVEE (253 aa). Positions 367–383 are enriched in basic and acidic residues; it reads QVEKSEMGVPRRQESQV. Over residues 384–395 the composition is skewed to low complexity; that stretch reads KKSQSGVSKGQE. 2 stretches are compositionally biased toward basic and acidic residues: residues 412-447 and 485-544; these read QVEK…KKSE and EAQE…EKSK.

It is found in the membrane. This chain is Testis-expressed basic protein 1, found in Homo sapiens (Human).